Here is an 834-residue protein sequence, read N- to C-terminus: Unextended protein (834 aa).

The signal sequence occupies residues 1 to 20 (MNTYFISFITIIIFANGING). At 21–182 (TSVDTSNKLL…DFLKIKTFEP (162 aa)) the chain is on the extracellular side. N38, N42, and N156 each carry an N-linked (GlcNAc...) asparagine glycan. A CNNM transmembrane domain is found at 182–361 (PLIPVWLAII…NDVNDLDKNE (180 aa)). A helical membrane pass occupies residues 183-203 (LIPVWLAIIIIVTCLGFSALF). Topologically, residues 204-244 (SGLNLGLMSMDRTELKILRNTGTEKEKKYASKIAPVRDQGN) are cytoplasmic. The helical transmembrane segment at 245-265 (YLLCSILLGNVLVNSTFTILL) threads the bilayer. The Extracellular segment spans residues 266 to 267 (DG). A helical transmembrane segment spans residues 268–288 (LTSGLFAVIFSTLAIVLFGEI). Residues 289-298 (TPQAVCSRHG) lie on the Cytoplasmic side of the membrane. A helical transmembrane segment spans residues 299–319 (LAIGAKTILVTKTVMAITAPL). Topologically, residues 320 to 834 (SYPVSRILDK…DKFESKQSKP (515 aa)) are extracellular. 2 CBS domains span residues 380–441 (MTHI…NTPL) and 448–515 (YQNP…IVDE). N-linked (GlcNAc...) asparagine glycosylation occurs at N522. Position 604-656 (604-656 (YIFTQGKAVDFFVLILEGRVEVTIGKEALMFESGPFTYFGTQALVPNVVIDSP)) interacts with a nucleoside 3',5'-cyclic phosphate. Residues 739-765 (CFAQNQSTRRLSNRSINSSPTNMNRSP) form a disordered region. Polar residues predominate over residues 740 to 763 (FAQNQSTRRLSNRSINSSPTNMNR). 3 N-linked (GlcNAc...) asparagine glycosylation sites follow: N743, N751, and N790. The segment at 807 to 834 (SGEQDTTAASMPLLPKLDDKFESKQSKP) is disordered. Residues 822-834 (KLDDKFESKQSKP) are compositionally biased toward basic and acidic residues.

This sequence belongs to the ACDP family. In terms of assembly, interacts with PRL-1, possibly at the plasma membrane.

It localises to the cell membrane. Functionally, probable metal transporter. Acts downstream of PRL-1 and protects the nervous system against olfactory carbon dioxide stimulation. The polypeptide is Unextended protein (Drosophila melanogaster (Fruit fly)).